Consider the following 417-residue polypeptide: Serine protease hepsin (417 aa).

The Cytoplasmic portion of the chain corresponds to methionine 1–alanine 23. The helical; Signal-anchor for type II membrane protein transmembrane segment at glycine 24–leucine 44 threads the bilayer. The Extracellular portion of the chain corresponds to arginine 45–leucine 417. The region spanning valine 54 to glutamine 151 is the SRCR domain. Intrachain disulfides connect cysteine 77–cysteine 140, cysteine 90–cysteine 150, cysteine 119–cysteine 138, cysteine 153–cysteine 277, cysteine 188–cysteine 204, cysteine 291–cysteine 359, cysteine 322–cysteine 338, and cysteine 349–cysteine 381. N-linked (GlcNAc...) asparagine glycosylation occurs at asparagine 112. One can recognise a Peptidase S1 domain in the interval isoleucine 163–lysine 405. Catalysis depends on charge relay system residues histidine 203 and aspartate 257. The active-site Charge relay system is serine 353.

This sequence belongs to the peptidase S1 family. As to expression, detected in liver and kidney.

The protein localises to the cell membrane. It localises to the apical cell membrane. It carries out the reaction Cleavage after basic amino-acid residues, with Arg strongly preferred to Lys.. Its function is as follows. Serine protease that cleaves extracellular substrates, and contributes to the proteolytic processing of growth factors, such as HGF and MST1/HGFL. Plays a role in cell growth and maintenance of cell morphology. Plays a role in the proteolytic processing of ACE2. Mediates the proteolytic cleavage of urinary UMOD that is required for UMOD polymerization. This Homo sapiens (Human) protein is Serine protease hepsin (HPN).